Here is a 164-residue protein sequence, read N- to C-terminus: UPF0561 protein C2orf68 homolog (164 aa).

2 stretches are compositionally biased toward basic and acidic residues: residues 1-13 (MEVI…ESVK) and 35-49 (IARD…QAKE). The disordered stretch occupies residues 1-98 (MEVIRDGEGE…WNESSSGTEM (98 aa)). The span at 50–64 (KQRRRHTNTPRRPRR) shows a compositional bias: basic residues.

It belongs to the UPF0561 family.

The protein is UPF0561 protein C2orf68 homolog of Danio rerio (Zebrafish).